Reading from the N-terminus, the 363-residue chain is MTLSTAQEIIEDIHQGKMVILMDDEDRENEGDLIIASDKVTPEAINFMATYGRGLICLTLNKERCLQLELPMMVKSNTDKFATPFTISIEAASGVTTGISVNDRARTVQAAIAATATAKDIVMPGHIFPLMAQDGGVLARAGHTEAGCDVARLAGLEPSSVIVEILNDDGTMARRPQLEVFAKKHGLKLGTVADLIEYRNKYETMIERISECKLNTEFGEFDMITYRDKINHQIHYALQKGNIEPNSQTLVRVHLQDTFKDILQTGSTRWTLPAAMERISSENGVLVIVTKQEDPEMVISKIQNLALENKETPVVNSQSRQVGLGSQILSDLGIRKMRLLSSSSHLYHSLSGFGLEIVEYVCS.

Residues 1 to 201 are DHBP synthase; sequence MTLSTAQEII…VADLIEYRNK (201 aa). D-ribulose 5-phosphate contacts are provided by residues 27-28, aspartate 32, 140-144, and glutamate 164; these read RE and RAGHT. Glutamate 28 contributes to the Mg(2+) binding site. Histidine 143 is a binding site for Mg(2+). The tract at residues 202–363 is GTP cyclohydrolase II-like; the sequence is YETMIERISE…GLEIVEYVCS (162 aa).

The protein in the N-terminal section; belongs to the DHBP synthase family. This sequence in the C-terminal section; belongs to the GTP cyclohydrolase II family. The cofactor is Mg(2+). Mn(2+) serves as cofactor.

It carries out the reaction D-ribulose 5-phosphate = (2S)-2-hydroxy-3-oxobutyl phosphate + formate + H(+). Its pathway is cofactor biosynthesis; riboflavin biosynthesis; 2-hydroxy-3-oxobutyl phosphate from D-ribulose 5-phosphate: step 1/1. Its function is as follows. Catalyzes the conversion of D-ribulose 5-phosphate to formate and 3,4-dihydroxy-2-butanone 4-phosphate. The protein is 3,4-dihydroxy-2-butanone 4-phosphate synthase (ribB) of Photobacterium phosphoreum.